We begin with the raw amino-acid sequence, 265 residues long: MAIKEKQVQDYGENPIEVRDSDHYQNEYIEGFVEKWDELINWHARSSSEGEFFIKTLKEHGAKRVLDAATGTGFHSIRLIEAGFDVASVDGSVEMLVKAFENATRKDQILRTVHSDWRQVTRHIQERFDAVICLGNSFTHLFSEEDRRKTLAEFYSVLKHDGILILDQRNYDLILDEGFKSKHTYYYCGDNVKAEPEYVDDGLARFRYEFPDQSVYHLNMFPLRKDYVRRLLHEVGFQDITTYGDFQETYHQDDPDFYIHVAKKD.

Residues Tyr-28, Trp-36, Arg-45, Ala-69, Asp-90, 116–117, and Leu-134 contribute to the S-adenosyl-L-methionine site; that span reads DW. The substrate site is built by Asn-136, Arg-169, and Tyr-208.

Belongs to the class I-like SAM-binding methyltransferase superfamily. Glycine N-methyltransferase family. Monomer.

It carries out the reaction glycine + 2 S-adenosyl-L-methionine = N,N-dimethylglycine + 2 S-adenosyl-L-homocysteine + 2 H(+). The enzyme catalyses glycine + S-adenosyl-L-methionine = sarcosine + S-adenosyl-L-homocysteine + H(+). The catalysed reaction is sarcosine + S-adenosyl-L-methionine = N,N-dimethylglycine + S-adenosyl-L-homocysteine + H(+). It functions in the pathway amine and polyamine biosynthesis; betaine biosynthesis via glycine pathway; betaine from glycine: step 1/3. The protein operates within amine and polyamine biosynthesis; betaine biosynthesis via glycine pathway; betaine from glycine: step 2/3. With respect to regulation, inhibited by acetate, dimethylglycine and S-adenosyl-L-homocysteine. In terms of biological role, catalyzes the methylation of glycine and sarcosine to sarcosine and dimethylglycine, respectively, with S-adenosylmethionine (AdoMet) acting as the methyl donor. This Aphanothece halophytica protein is Glycine/sarcosine N-methyltransferase.